An 89-amino-acid chain; its full sequence is Small ribosomal subunit protein uS17 (89 aa).

It belongs to the universal ribosomal protein uS17 family. As to quaternary structure, part of the 30S ribosomal subunit.

In terms of biological role, one of the primary rRNA binding proteins, it binds specifically to the 5'-end of 16S ribosomal RNA. The sequence is that of Small ribosomal subunit protein uS17 from Leptospira interrogans serogroup Icterohaemorrhagiae serovar Lai (strain 56601).